The chain runs to 528 residues: MNDDPNALARIWIDVVADLTSDSPGGDLPPLTRGQKAWLALVKPLTLAQGFALLSVPSPFAQEAIERDLREPILHALGRHLGEQVEGLGVRIAAPVDDEPESEAPSRERRPDPEPVHTPRHLEPSVTSSGTFRRRRFGSGDDQPYSDTTDFEEVDDDSEALASVHESWPSYFTKPPAGPAPAATGGNSLNAKYTFDTFVIGSSNRFAHAAAVAIAEAPARAYNPLFIWGASGLGKTHLLHAAGHYAQRLFPGMRVKYVSTEEFTNDFINSLRDDRKVAFKRRYRETDVLLVDDIQFIEGKEGIQEEFFHTFNTLHNANKQIVVSSDRPPKQLATLEERLRTRFEWGLITDVQPPELETRIAILSKKARMDRLEVPDDVLELIASRIERNIRELEGALIRVTAFASLNRQPLDLTLAEVVLRDLMPDSSSLEINAATIMAVTAEYFNMSIDDLCGPGKARPLASARQISMYLCRELTDLSLPKIGQTFGRDHTTVMYADKKIRKEMTERRKVYDQVQELTARIKQRSKR.

Residues 1–104 form a domain I, interacts with DnaA modulators region; it reads MNDDPNALAR…PVDDEPESEA (104 aa). A disordered region spans residues 93–159; it reads AAPVDDEPES…DFEEVDDDSE (67 aa). Residues 104–123 show a composition bias toward basic and acidic residues; it reads APSRERRPDPEPVHTPRHLE. A domain II region spans residues 105–187; it reads PSRERRPDPE…GPAPAATGGN (83 aa). Residues 149 to 159 show a composition bias toward acidic residues; sequence TDFEEVDDDSE. The domain III, AAA+ region stretch occupies residues 188 to 404; the sequence is SLNAKYTFDT…GALIRVTAFA (217 aa). 4 residues coordinate ATP: glycine 232, glycine 234, lysine 235, and threonine 236. Residues 405–528 form a domain IV, binds dsDNA region; sequence SLNRQPLDLT…TARIKQRSKR (124 aa).

It belongs to the DnaA family. As to quaternary structure, oligomerizes as a right-handed, spiral filament on DNA at oriC.

Its subcellular location is the cytoplasm. Functionally, plays an essential role in the initiation and regulation of chromosomal replication. ATP-DnaA binds to the origin of replication (oriC) to initiate formation of the DNA replication initiation complex once per cell cycle. Binds the DnaA box (a 9 base pair repeat at the origin) and separates the double-stranded (ds)DNA. Forms a right-handed helical filament on oriC DNA; dsDNA binds to the exterior of the filament while single-stranded (ss)DNA is stabiized in the filament's interior. The ATP-DnaA-oriC complex binds and stabilizes one strand of the AT-rich DNA unwinding element (DUE), permitting loading of DNA polymerase. After initiation quickly degrades to an ADP-DnaA complex that is not apt for DNA replication. Binds acidic phospholipids. This is Chromosomal replication initiator protein DnaA from Rhodococcus opacus (strain B4).